Here is a 402-residue protein sequence, read N- to C-terminus: N-acetyllactosaminide beta-1,6-N-acetylglucosaminyl-transferase (402 aa).

The Cytoplasmic portion of the chain corresponds to 1-7; sequence MMGSWKH. Residues 8–23 form a helical; Signal-anchor for type II membrane protein membrane-spanning segment; the sequence is CLFSASLISALIFVFV. Topologically, residues 24-400 are lumenal; that stretch reads YNTELWENKR…QSETAIQPSW (377 aa). Asparagine 41 carries an N-linked (GlcNAc...) asparagine glycan.

It belongs to the glycosyltransferase 14 family. In terms of tissue distribution, expressed in lens epithelium cells. Expressed in reticulocytes.

The protein resides in the golgi apparatus membrane. It carries out the reaction a beta-D-Gal-(1-&gt;4)-beta-D-GlcNAc-(1-&gt;3)-beta-D-Gal-(1-&gt;4)-beta-D-GlcNAc derivative + UDP-N-acetyl-alpha-D-glucosamine = a beta-D-Gal-(1-&gt;4)-beta-D-GlcNAc-(1-&gt;3)-[beta-D-GlcNAc-(1-&gt;6)]-beta-D-Gal-(1-&gt;4)-N-acetyl-beta-D-glucosaminyl derivative + UDP + H(+). Its pathway is protein modification; protein glycosylation. In terms of biological role, branching enzyme that converts linear into branched poly-N-acetyllactosaminoglycans. Introduces the blood group I antigen during embryonic development. It is closely associated with the development and maturation of erythroid cells. Determines the expression of the blood group I antigen in erythrocytes. In Homo sapiens (Human), this protein is N-acetyllactosaminide beta-1,6-N-acetylglucosaminyl-transferase (GCNT2).